The chain runs to 254 residues: UPF0246 protein FTW_0267 (254 aa).

It belongs to the UPF0246 family.

This is UPF0246 protein FTW_0267 from Francisella tularensis subsp. tularensis (strain WY96-3418).